The chain runs to 169 residues: Nucleoside diphosphate kinase 3 (169 aa).

ADP contacts are provided by Lys29, Arg105, Thr111, Arg122, Val129, and Asn132. His135 acts as the Pros-phosphohistidine intermediate in catalysis.

This sequence belongs to the NDK family. Homohexamer. Interacts (via its N-terminal region) with KAT5; this interaction enables recruitment of NME3 at DNA damage sites where it plays a role in the repair of DNA. Found in association with several ciliary nephronophthisis proteins, including NEK8, CEP164, ANKS6. It depends on Mg(2+) as a cofactor.

It localises to the mitochondrion outer membrane. Its subcellular location is the cytoplasm. It is found in the cytoskeleton. The protein localises to the cilium basal body. The enzyme catalyses a 2'-deoxyribonucleoside 5'-diphosphate + ATP = a 2'-deoxyribonucleoside 5'-triphosphate + ADP. It carries out the reaction a ribonucleoside 5'-diphosphate + ATP = a ribonucleoside 5'-triphosphate + ADP. Its function is as follows. Catalyzes the phosphorylation of ribonucleosides and deoxyribonucleoside diphosphates, other than ATP, into the corresponding triphosphates with ATP as the major phosphate donor. The ATP gamma phosphate is transferred to the nucleoside diphosphate beta phosphate via a ping-pong mechanism, using a phosphorylated active-site intermediate. Through the catalyzed exchange of gamma-phosphate between di- and triphosphonucleosides participates in regulation of intracellular nucleotide homeostasis. Inhibits granulocyte differentiation. May be required for ciliary function during renal development. In terms of biological role, independently of its kinase activity, facilitates mitochondrial tethering prior to membrane fusion through its direct membrane-binding and hexamerization. Implicated in repair of both single- and double-stranded breaks in DNA through its association with the ribonucleotide reductase complex (RNR complex) via its interaction with the histone acetyltransferase KAT5, this interaction enables recruitment of NME3 at DNA damage sites where it plays a role in the repair of DNA, independently of its kinase activity. The chain is Nucleoside diphosphate kinase 3 from Homo sapiens (Human).